Here is a 982-residue protein sequence, read N- to C-terminus: Mitochondrial DNA mismatch repair protein mutS homolog (982 aa).

698–705 (SVNGAGKS) serves as a coordination point for ATP. The HNH domain occupies 905 to 951 (CEICGAPADAVHHIKPKSEHKKLCNRKLNRRSNLVPVCSSCHLDIHR).

It belongs to the DNA mismatch repair MutS family.

It is found in the mitochondrion. May be involved in DNA-mismatch repair. The sequence is that of Mitochondrial DNA mismatch repair protein mutS homolog from Sarcophyton glaucum (Toadstool umbrella leather coral).